Reading from the N-terminus, the 137-residue chain is MLQPKRTKYRKKQKGRCSGLATRGDRVSFGEFGLKATTRGPITSRQIEAARRAINRYIRRGGKIWIRVFPDKPVTEKPLEVRMGKGKGNVDHWCEPIAPGRVLYELEGVSEEVAREAFRRAAAKLPVKTTFVNRTVM.

The protein belongs to the universal ribosomal protein uL16 family. As to quaternary structure, part of the 50S ribosomal subunit.

Functionally, binds 23S rRNA and is also seen to make contacts with the A and possibly P site tRNAs. The sequence is that of Large ribosomal subunit protein uL16 from Halorhodospira halophila (strain DSM 244 / SL1) (Ectothiorhodospira halophila (strain DSM 244 / SL1)).